Consider the following 974-residue polypeptide: Probable proton ATPase 1B (974 aa).

Residues 1–23 show a composition bias toward basic and acidic residues; sequence MSSKKYELDAAAFEDKPESHSDA. The interval 1-61 is disordered; that stretch reads MSSKKYELDA…ATDLLPPSKG (61 aa). Transmembrane regions (helical) follow at residues 93-112, 118-137, 265-286, and 295-321; these read GLWGPMPAALWIAIIIEFAL, GAILFAIQIANATIGWYETI, VMLALCAISFILCMCCFIYLLA, and ALQFAVVVLVVSIPIALEIVVTTTLAV. The active-site 4-aspartylphosphate intermediate is Asp-351. Helical transmembrane passes span 631 to 651, 662 to 684, 698 to 712, 738 to 761, 813 to 840, and 869 to 887; these read AAADMVLTEPGLSVVVEAMLV, FLTYRISATLQLVCFFFIACFSL, FFHLPVLMFMLITLL, VVFVSASILAAVACGSSLMLLWIG, FFFYVPPSPILFCGAIISLLVSTMAASF, and VWIYCIVWWFVQDVVKVLA. Positions 952 to 974 are disordered; that stretch reads REDTHVLNESTSPVNAFSPKVKK.

Belongs to the cation transport ATPase (P-type) (TC 3.A.3) family. Type IIIA subfamily.

Its subcellular location is the membrane. It catalyses the reaction ATP + H2O + H(+)(in) = ADP + phosphate + 2 H(+)(out). The chain is Probable proton ATPase 1B (H1B) from Leishmania donovani.